A 278-amino-acid polypeptide reads, in one-letter code: Phosphoenolpyruvate carboxylase kinase 2 (278 aa).

In terms of domain architecture, Protein kinase spans 11 to 269 (YQLCDEIGRG…AEDALRHSWM (259 aa)). Residues 17–25 (IGRGRFGTI) and Lys-40 contribute to the ATP site. Catalysis depends on Asp-137, which acts as the Proton acceptor.

It belongs to the protein kinase superfamily. Ser/Thr protein kinase family. As to expression, expressed in flowers and roots, and at lower levels in cauline leaves. Barely detectable in rosette leaves and stems.

It carries out the reaction L-seryl-[protein] + ATP = O-phospho-L-seryl-[protein] + ADP + H(+). It catalyses the reaction L-threonyl-[protein] + ATP = O-phospho-L-threonyl-[protein] + ADP + H(+). Its function is as follows. Calcium-independent kinase involved in light-dependent phosphoenolpyruvate carboxylase phosphorylation. This Arabidopsis thaliana (Mouse-ear cress) protein is Phosphoenolpyruvate carboxylase kinase 2 (PPCK2).